An 894-amino-acid polypeptide reads, in one-letter code: E3 ubiquitin-protein ligase SH3RF1 (894 aa).

The segment at 12–53 adopts an RING-type zinc-finger fold; that stretch reads CPVCLERLDASAKVLPCQHTFCKRCLLGIVGSRNELRCPECR. 2 SH3 domains span residues 134-193 and 196-259; these read PQLP…IIKP and QPPP…FNSA. Positions 274–323 are disordered; that stretch reads VDTAECPSATAAQSSSASKHSDTKKNTRKRHSFTSLTMANKSSQASQNRH. Residues 281-291 show a composition bias toward low complexity; sequence SATAAQSSSAS. Residues 293 to 363 are interaction with RAC1; it reads HSDTKKNTRK…APSQVHISTT (71 aa). Residue Ser-305 is modified to Phosphoserine. Over residues 306–322 the composition is skewed to polar residues; that stretch reads FTSLTMANKSSQASQNR. Residues 448–551 form an interaction with AKT2 region; the sequence is HLRPQTRPSV…STAGGPAQKP (104 aa). Residues 453 to 514 form the SH3 3 domain; the sequence is TRPSVYVAIY…PGNYVAPVTR (62 aa). Disordered regions lie at residues 526–556 and 682–751; these read MSTA…GNGV and LETE…PTLD. Ser-540 carries the post-translational modification Phosphoserine. Positions 700-713 are enriched in polar residues; the sequence is SPESAASACGNSSA. The span at 715 to 726 shows a compositional bias: basic and acidic residues; that stretch reads KPDKDSKKEKKG. Ser-743 is subject to Phosphoserine. In terms of domain architecture, SH3 4 spans 835 to 894; the sequence is VVCERHRVVVSYPPQSEAELELKEGDIVFVHKKREDGWFKGTLQRNGKTGLFPGSFVENI.

Belongs to the SH3RF family. As to quaternary structure, interacts with HERP1. Interacts with RAC1; in a GTP-dependent manner. Interacts with MAP3K10/MLK2 and MAP3K11/MLK3. Interacts with MAPK8IP; this interaction leads to the PJAC complex (POSH-JIP or SH3RF1/MAPK8IP apoptotic complex) with a 1:1 ratio. Interacts with SIAH1. Probably part of a signaling complex that may contain SH3RF1, MAPK8IP, DLK1, MAP2K4/MKK4, MAP2K7/MKK7, MAPK8/JNK1, MAPK9/JNK2, AKT1 and AKT2. Found in a complex with RAC2, MAP3K7/TAK1, MAP2K7/MKK7, MAPK8IP1/JIP1, MAPK8/JNK1 and MAPK9/JNK2. Found in a complex with RAC1, MAP3K11/MLK3, MAP2K7/MKK7, MAPK8IP1/JIP1 and MAPK8/JNK1. Interacts with SH3RF2. Phosphorylated at Ser-305 by AKT1 and AKT2. When phosphorylated, it has reduced ability to bind Rac. Post-translationally, autoubiquitinated. Ubiquitinated by SH3RF2, leading to proteasome-mediated degradation.

It localises to the cytoplasm. It is found in the perinuclear region. Its subcellular location is the cell projection. The protein localises to the lamellipodium. The protein resides in the golgi apparatus. It localises to the trans-Golgi network. It catalyses the reaction S-ubiquitinyl-[E2 ubiquitin-conjugating enzyme]-L-cysteine + [acceptor protein]-L-lysine = [E2 ubiquitin-conjugating enzyme]-L-cysteine + N(6)-ubiquitinyl-[acceptor protein]-L-lysine.. Its pathway is protein modification; protein ubiquitination. Has E3 ubiquitin-protein ligase activity. In the absence of an external substrate, it can catalyze self-ubiquitination. Stimulates ubiquitination of potassium channel KCNJ1, enhancing it's dynamin-dependent and clathrin-independent endocytosis. Acts as a scaffold protein that coordinates with MAPK8IP1/JIP1 in organizing different components of the JNK pathway, including RAC1 or RAC2, MAP3K11/MLK3 or MAP3K7/TAK1, MAP2K7/MKK7, MAPK8/JNK1 and/or MAPK9/JNK2 into a functional multiprotein complex to ensure the effective activation of the JNK signaling pathway. Regulates the differentiation of CD4(+) and CD8(+) T-cells and promotes T-helper 1 (Th1) cell differentiation. Regulates the activation of MAPK8/JNK1 and MAPK9/JNK2 in CD4(+) T-cells and the activation of MAPK8/JNK1 in CD8(+) T-cells. Plays a crucial role in the migration of neocortical neurons in the developing brain. Controls proper cortical neuronal migration and the formation of proximal cytoplasmic dilation in the leading process (PCDLP) in migratory neocortical neurons by regulating the proper localization of activated RAC1 and F-actin assembly. The protein is E3 ubiquitin-protein ligase SH3RF1 (Sh3rf1) of Rattus norvegicus (Rat).